The following is a 64-amino-acid chain: Translation machinery-associated protein 7 homolog (64 aa).

Positions Met1–Lys64 are disordered. The segment covering Met27–Lys38 has biased composition (basic and acidic residues). Positions Met27 to Lys50 form a coiled coil. Low complexity predominate over residues Ala39–Lys50. The span at Leu53–Lys64 shows a compositional bias: gly residues.

In Drosophila melanogaster (Fruit fly), this protein is Translation machinery-associated protein 7 homolog.